A 145-amino-acid chain; its full sequence is Large ribosomal subunit protein uL13 (145 aa).

The protein belongs to the universal ribosomal protein uL13 family. In terms of assembly, part of the 50S ribosomal subunit.

Its function is as follows. This protein is one of the early assembly proteins of the 50S ribosomal subunit, although it is not seen to bind rRNA by itself. It is important during the early stages of 50S assembly. In Macrococcus caseolyticus (strain JCSC5402) (Macrococcoides caseolyticum), this protein is Large ribosomal subunit protein uL13.